A 447-amino-acid polypeptide reads, in one-letter code: MKRKKTVIHQLISEKQRFEKAKEGGNMAAKDDFGTTKYIIHAEFEANGVVERPDVVGAIFGQTEGLLGDDLDLRELQKTGRIGRIKVEVHTKAGKTYGTILVPSSLDRVETAIIAAALETIDRVGPCEAKIRVIKIEDVRATKRKYIIERAKEILETLMEEEIPETQELVEEVRKAVREMELIEYGPEKLPAGPHVPFSDSIIVVEGRADVLNLLRHGIKNAIAVEGTSIPETIIKLSKERIVTAFTDGDRGGELILKELLQVADIDYVARAPEGKEVEELTKKEIIKALRSKVPADQLLTIVQQRKELFDKLGRERRRGGARKQEYTKKGSLNPQPQVHPNEKIVKPLKVLKPDYKEFEEFIEKVKNDSIALLIDENKNIIKEVPIRDMLSAIESSESIYAVVFNGVITQRLIDIVSEKGAKYLIGARKANVVRRPITLKIITFAE.

Positions 200 to 274 constitute a Toprim domain; that stretch reads DSIIVVEGRA…DIDYVARAPE (75 aa). Mg(2+) contacts are provided by glutamate 206, aspartate 248, and aspartate 250. The interval 316–339 is disordered; sequence ERRRGGARKQEYTKKGSLNPQPQV.

It belongs to the archaeal DnaG primase family. As to quaternary structure, forms a ternary complex with MCM helicase and DNA. Component of the archaeal exosome complex. The cofactor is Mg(2+).

It carries out the reaction ssDNA + n NTP = ssDNA/pppN(pN)n-1 hybrid + (n-1) diphosphate.. In terms of biological role, RNA polymerase that catalyzes the synthesis of short RNA molecules used as primers for DNA polymerase during DNA replication. Also part of the exosome, which is a complex involved in RNA degradation. Acts as a poly(A)-binding protein that enhances the interaction between heteromeric, adenine-rich transcripts and the exosome. This chain is DNA primase DnaG, found in Pyrococcus furiosus (strain ATCC 43587 / DSM 3638 / JCM 8422 / Vc1).